A 287-amino-acid chain; its full sequence is ATP synthase gamma chain (287 aa).

It belongs to the ATPase gamma chain family. In terms of assembly, F-type ATPases have 2 components, CF(1) - the catalytic core - and CF(0) - the membrane proton channel. CF(1) has five subunits: alpha(3), beta(3), gamma(1), delta(1), epsilon(1). CF(0) has three main subunits: a, b and c.

Its subcellular location is the cell membrane. In terms of biological role, produces ATP from ADP in the presence of a proton gradient across the membrane. The gamma chain is believed to be important in regulating ATPase activity and the flow of protons through the CF(0) complex. The sequence is that of ATP synthase gamma chain from Bacillus velezensis (strain DSM 23117 / BGSC 10A6 / LMG 26770 / FZB42) (Bacillus amyloliquefaciens subsp. plantarum).